The following is a 727-amino-acid chain: MEGERKNNNKRWYFTREQLENSPSRRFGLDPDKELSYRQQAANLLQDMGQRLNVSQLTINTAIVYMHRFYMIQSFTQFHRNSVAPAALFLAAKVEEQPKKLEHVIKVAHACLHPQESLPDTRSEAYLQQVQDLVILESIILQTLGFELTIDHPHTHVVKCTQLVRASKDLAQTSYFMATNSLHLTTFSLQYTPPVVACVCIHLACKWSNWEIPVSTDGKHWWEYVDATVTLELLDELTHEFLQILEKTPNRLKRIRNWRACQAAKKTKADDRGTDENTSEQTILNMISQSSSDTTIAGLMSMSTSSTTSTVPSLPTTEESSSNLSGVEMLQGERWLSSQPPFKLEPAQGHRTSENLALIGVDHSLQQDGSNAFISQKQNSSKSVPSAKVSLKEYRAKHAEELAAQKRQLENMEANVKSQYAYAAQNLLSHHDSHSSVILKMPIEGSENPERPFLEKPDKTALKMRIPVASGDKAASSKPEEIKMRIKVHAAPDKHNSIDDSVTKSREHKEKHKTHPSNHHHHHNHHSHKHSHSQLPAGTGNKRPGDPKHSSQTSTLAHKTYSLSSSFSSSSSSRKRGPPEETGGALFDHPAKIAKSTKSSSINFFPPLPTMAQLPGHSSDTSGLPFSQPSCKTRVPHMKLDKGPTGANGHNTTQTIDYQDTVNMLHSLLHAQGVQPTQPPALEFVHSYGEYLNPRAGGMPSRSGNTDKPRLPPLPSEPPPPLPPLPK.

Position 117 is a phosphoserine (serine 117). The short motif at 253–270 (KRIRNWRACQAAKKTKAD) is the Nuclear localization signal, and interaction with Tat-TAR RNA element. Residues 302–322 (MSTSSTTSTVPSLPTTEESSS) are compositionally biased toward low complexity. Positions 302–326 (MSTSSTTSTVPSLPTTEESSSNLSG) are disordered. Residue lysine 343 forms a Glycyl lysine isopeptide (Lys-Gly) (interchain with G-Cter in SUMO2) linkage. The stretch at 386–427 (SAKVSLKEYRAKHAEELAAQKRQLENMEANVKSQYAYAAQNL) forms a coiled coil. Phosphoserine is present on serine 390. Position 392 is an N6-acetyllysine (lysine 392). A Glycyl lysine isopeptide (Lys-Gly) (interchain with G-Cter in SUMO2) cross-link involves residue lysine 417. Residues serine 418, serine 476, and serine 477 each carry the ADP-ribosylserine modification. Residues 482 to 552 (IKMRIKVHAA…RPGDPKHSSQ (71 aa)) are histidine-rich domain (HRD). Residue lysine 483 forms a Glycyl lysine isopeptide (Lys-Gly) (interchain with G-Cter in SUMO2) linkage. Over residues 486–508 (IKVHAAPDKHNSIDDSVTKSREH) the composition is skewed to basic and acidic residues. Disordered regions lie at residues 486 to 591 (IKVH…DHPA) and 692 to 727 (LNPR…PLPK). Position 487 is an N6-(ADP-ribosyl)lysine (lysine 487). Histidine 489 is modified (ADP-ribosylhistidine). A phosphoserine mark is found at serine 497 and serine 501. Residues 509 to 532 (KEKHKTHPSNHHHHHNHHSHKHSH) show a composition bias toward basic residues. Position 532 is an ADP-ribosylhistidine (histidine 532). 3 positions are modified to ADP-ribosylserine: serine 533, serine 551, and serine 554. Histidine 558 carries the post-translational modification ADP-ribosylhistidine. A compositionally biased stretch (low complexity) spans 562–572 (SLSSSFSSSSS). Serine 565 carries the ADP-ribosylserine modification. The residue at position 566 (serine 566) is a Phosphoserine. Pro residues predominate over residues 711-727 (LPPLPSEPPPPLPPLPK).

The protein belongs to the cyclin family. Cyclin C subfamily. In terms of assembly, cyclin-T1 is the predominant cyclin that associates with CDK9 to form a heterodimer called P-TEFb. P-TEFb forms a complex with AFF4/AF5Q31. Component of a complex which is at least composed of HTATSF1/Tat-SF1, P-TEFb complex, RNA pol II, SUPT5H, and NCL/nucleolin. Component of the 7SK snRNP complex at least composed of P-TEFb (composed of CDK9 and CCNT1/cyclin-T1), HEXIM1, HEXIM2, BCDIN3, SART3 proteins and 7SK and U6 snRNAs. Interacts (via central region) with ZMYND8 (via N-terminus); the interaction is direct and the association appears to occur between homodimeric ZMYND8 and the activated form of the P-TEFb complex. Interacts with BRD4, targets chromatin binding. Interacts with JMJD6. Interacts with MDFIC. Interacts with HSF1. Interacts with HTATSF1. Interacts with TBX21. In terms of processing, ADP-ribosylation on serine residues by PARP1 in response to DNA damage disrupts the phase separation activity of CCNT1, thereby preventing activation of CDK9.

It is found in the nucleus. Regulatory subunit of the cyclin-dependent kinase pair (CDK9/cyclin-T1) complex, also called positive transcription elongation factor B (P-TEFb), which facilitates the transition from abortive to productive elongation by phosphorylating the CTD (C-terminal domain) of the large subunit of RNA polymerase II (RNA Pol II). Required to activate the protein kinase activity of CDK9: acts by mediating formation of liquid-liquid phase separation (LLPS) that enhances binding of P-TEFb to the CTD of RNA Pol II. This chain is Cyclin-T1 (CCNT1), found in Equus caballus (Horse).